Reading from the N-terminus, the 550-residue chain is Cytochrome P450 monooxygenase hasH (550 aa).

The helical transmembrane segment at 39 to 59 threads the bilayer; it reads IGVLASIVVLVTVVIGPKAVI. Residue Cys493 participates in heme binding.

The protein belongs to the cytochrome P450 family. Requires heme as cofactor.

Its subcellular location is the membrane. The protein operates within secondary metabolite biosynthesis. Its function is as follows. Cytochrome P450 monooxygenase; part of the gene cluster that mediates the biosynthesis of hexadehydro-astechrome (HAS), a tryptophan-derived iron(III)-complex that acts as a virulence factor in infected mice. Within the pathway, hasH, with the O-methyltransferase hasC and the FAD-linked oxidoreductase hasG, convert the hasE-prenylated Trp-Ala dipeptide into an O-methylated diketopiperazine that is then released from the hasD NRPS. The HAS biosynthesis begins with the synthesis of a tethered Trp-Ala dipeptide by the NRPS hasD. The 7-dimethylallyltryptophan synthase hasE then catalyzes the prenylation of the hasD-tethered tryptophan or the resulting tethered Trp-Ala dipeptide at the C-7 position of the indole moiety. HAS biosynthesis continues via tethered intermediates with the succesive action of the cytochrome P450 monooxygenase hasH, the O-methyltransferase hasC, and the FAD-linked oxidoreductase hasG. The resulting O-methylated diketopiperazine is then released from hasD. Finally, three O-methylated diketopiperazine molecules assemble in a trimeric complex with Fe(III) to produce hexadehydro-astechrome. The polypeptide is Cytochrome P450 monooxygenase hasH (Aspergillus fumigatus (strain CBS 144.89 / FGSC A1163 / CEA10) (Neosartorya fumigata)).